The following is a 470-amino-acid chain: Protein naked cuticle homolog 1 (470 aa).

Disordered regions lie at residues 1 to 21 (MGKLHSKPAAVCKRRESPEGD) and 90 to 114 (PPEKTDGLGSGDEKKMERVSEPCPG). A lipid anchor (N-myristoyl glycine) is attached at Gly-2. Positions 92 to 109 (EKTDGLGSGDEKKMERVS) are enriched in basic and acidic residues. Positions 125–190 (QCDVSMEEDS…LRVKLTVAPD (66 aa)) are interaction with DVL1, DVL2 and DVL3. An EF-hand domain is found at 131 to 166 (EEDSRQEWTFTLYDFDNNGKVTREDITSLLHTIYEV). The Ca(2+) site is built by Asp-144, Asp-146, Asn-148, Lys-150, and Asp-155. Residues 192–205 (SQSKRSVLVNQADL) are compositionally biased toward polar residues. Disordered stretches follow at residues 192-228 (SQSKRSVLVNQADLQSARPRAETKPTEDLRSWEKKQR), 271-314 (QFGP…QGVD), 337-357 (GTQDGSKHFVRSPKAQGKSVG), and 446-470 (GQPVQRHEHHHHHEHHHHYHHFYQT). The segment covering 210-227 (PRAETKPTEDLRSWEKKQ) has biased composition (basic and acidic residues). Polar residues predominate over residues 271-281 (QFGPGSPSVAQ). Positions 452–470 (HEHHHHHEHHHHYHHFYQT) are enriched in basic residues.

This sequence belongs to the NKD family. Interacts with DVL1, DVL2, DVL3 and PPP2R3A. In terms of tissue distribution, expressed in colon, heart, kidney, leukocyte, liver, lung, ovary, pancreas, placenta, prostate, skeletal muscle, small intestine and spleen.

It is found in the cell membrane. It localises to the cytoplasm. Its function is as follows. Cell autonomous antagonist of the canonical Wnt signaling pathway. May activate a second Wnt signaling pathway that controls planar cell polarity. In Homo sapiens (Human), this protein is Protein naked cuticle homolog 1 (NKD1).